The primary structure comprises 80 residues: UPF0248 protein MJ1316 (80 aa).

It belongs to the UPF0248 family.

In Methanocaldococcus jannaschii (strain ATCC 43067 / DSM 2661 / JAL-1 / JCM 10045 / NBRC 100440) (Methanococcus jannaschii), this protein is UPF0248 protein MJ1316.